Consider the following 92-residue polypeptide: Integration host factor subunit beta (92 aa).

Belongs to the bacterial histone-like protein family. As to quaternary structure, heterodimer of an alpha and a beta chain.

This protein is one of the two subunits of integration host factor, a specific DNA-binding protein that functions in genetic recombination as well as in transcriptional and translational control. This chain is Integration host factor subunit beta, found in Vibrio cholerae serotype O1 (strain ATCC 39541 / Classical Ogawa 395 / O395).